Consider the following 3974-residue polypeptide: Hybrid PKS-NRPS synthetase 1 (3974 aa).

Positions 5–442 (SQKIAIIGSA…GTNAHCLIES (438 aa)) constitute a Ketosynthase family 3 (KS3) domain. Catalysis depends on for beta-ketoacyl synthase activity residues Cys179, His316, and His362. Residues 561–883 (IFTGQGAQWA…TGILERGLDD (323 aa)) form a malonyl-CoA:ACP transacylase (MAT) domain region. The interval 954-1079 (HPLLGSRLSA…HDSELGIPES (126 aa)) is N-terminal hotdog fold. The segment at 954–1251 (HPLLGSRLSA…QVESVKLVPV (298 aa)) is dehydratase (DH) domain. The PKS/mFAS DH domain occupies 954 to 1257 (HPLLGSRLSA…LVPVITPDAS (304 aa)). The active-site Proton acceptor; for dehydratase activity is His986. The segment at 1107-1257 (TTPISSAKIY…LVPVITPDAS (151 aa)) is C-terminal hotdog fold. Asp1165 serves as the catalytic Proton donor; for dehydratase activity. The segment at 1398–1529 (PWNTELRNAI…GYLLLVAKTG (132 aa)) is methyltransferase (MT) domain. The segment at 2108–2282 (TYFLAGMTDS…ASIMDTGVVT (175 aa)) is ketoreductase (KR) domain. The tract at residues 2492–2516 (AGRSASPGASCSDRSLSTRSDETRS) is disordered. Polar residues predominate over residues 2498-2509 (PGASCSDRSLST). Residues 2560-2994 (APLSPGQAQL…LERLRTSSDQ (435 aa)) are condensation (C) domain. Residues 3021–3423 (DAMAEKYFDQ…DGSLILLGRM (403 aa)) form an adenylation (A) (KR) domain region. The 77-residue stretch at 3537–3613 (SADQLVEAEV…EMAEKMASVR (77 aa)) folds into the Carrier domain. O-(pantetheine 4'-phosphoryl)serine is present on Ser3573. A reductase (RED) domain region spans residues 3657–3940 (VVLTGAADLL…KLEMGEWIAL (284 aa)).

In the C-terminal section; belongs to the NRP synthetase family.

Its pathway is secondary metabolite biosynthesis. Functionally, hybrid PKS-NRPS synthetase; part of the hps1-dma1 gene cluster that probably mediates the biosynthesis a derivative of cyclopiazonic acid (CPA). The hybrid polyketide synthase-nonribosomal peptide synthetase (PKS-NRPS) nps1 might incorporates acetyl-CoA, malonyl-CoA, and tryptophan (Trp) and utilizes a C-terminal redox-incompetent reductase domain to make and release the tryptophan tetramic acid, cyclo-acetoacetyl-L-tryptophan (c-AATrp), as the first intermediate in the pathway. In addition, the cluster also includes the tryptophan dimethylallyltransferase dma1, the FAD-dependent oxidoreductase toxD, the cytochrome P450 monooxygenase cyp3.1 and the methyltransferase DOTSEDRAFT_139328; the latter 2 being not present in all CPA-producing fungi but involved in additional modifications that occur in biosynthesis the of a range of CPA and CPA-like products. Further studies are required to clarify whether the CPA-like hps1-dma1 cluster is functional or a non-functional relic reflecting evolution of D.septosporum. The chain is Hybrid PKS-NRPS synthetase 1 from Dothistroma septosporum (strain NZE10 / CBS 128990) (Red band needle blight fungus).